A 1283-amino-acid polypeptide reads, in one-letter code: 5-oxoprolinase PfmaA (1283 aa).

A disordered region spans residues 1256–1283; it reads NTPGGGAWGKPEGDADGYREEDQAGDGI. Residues 1266-1277 show a composition bias toward basic and acidic residues; the sequence is PEGDADGYREED.

This sequence belongs to the oxoprolinase family. Homodimer.

The catalysed reaction is 5-oxo-L-proline + ATP + 2 H2O = L-glutamate + ADP + phosphate + H(+). Functionally, 5-oxoprolinase; part of the gene cluster that mediates the biosynthesis of dihydroxynaphthalene (DHN)-melanin, a bluish-green pigment forming a dark layer in the conidial wall that protects the conidia from UV radiations. The first step of the pathway is the production of the pentaketide 1,3,6,8-tetrahydroxynaphthalene (1,3,6,8-THN or T4HN) by the polyketide synthase PfmaE though condensation of acetyl-CoA with malonyl-CoA. T4HN is not stable and easily oxidizes into the stable form flaviolin. T4HN is also substrate of the hydroxynaphthalene reductase PfmaG to yield scytalone. The scytalone dehydratase PfmaJ then reduces scytalone to 1,3,8-THN. 1,3,8-THN is then substrate of the hydroxynaphthalene reductase PfmaI to yield vermelone. Vermelone is further converted by the multicopper oxidase PfmaD to 1,8-DHN. Finally the laccase PFICI_06862 transforms 1,8-DHN to DHN-melanin. The roles of the 5-oxoprolinase PfmaA and the proline iminopeptidase PfmaB within the cluster have not been elucidated yet. The polypeptide is 5-oxoprolinase PfmaA (Pestalotiopsis fici (strain W106-1 / CGMCC3.15140)).